We begin with the raw amino-acid sequence, 234 residues long: Ribose-5-phosphate isomerase A (234 aa).

Residues 34–37, 90–93, and 103–106 each bind substrate; these read TGST, DGAD, and KGGG. The active-site Proton acceptor is the E112. K130 is a substrate binding site.

This sequence belongs to the ribose 5-phosphate isomerase family. Homodimer.

It catalyses the reaction aldehydo-D-ribose 5-phosphate = D-ribulose 5-phosphate. The protein operates within carbohydrate degradation; pentose phosphate pathway; D-ribose 5-phosphate from D-ribulose 5-phosphate (non-oxidative stage): step 1/1. In terms of biological role, catalyzes the reversible conversion of ribose-5-phosphate to ribulose 5-phosphate. The polypeptide is Ribose-5-phosphate isomerase A (Methanosarcina acetivorans (strain ATCC 35395 / DSM 2834 / JCM 12185 / C2A)).